The following is a 488-amino-acid chain: Ribulose bisphosphate carboxylase large chain (488 aa).

The substrate site is built by asparagine 127 and threonine 177. Lysine 179 (proton acceptor) is an active-site residue. Position 181 (lysine 181) interacts with substrate. Residues lysine 205, aspartate 207, and glutamate 208 each coordinate Mg(2+). Lysine 205 carries the N6-carboxylysine modification. Residue histidine 297 is the Proton acceptor of the active site. Positions 298, 330, and 382 each coordinate substrate.

This sequence belongs to the RuBisCO large chain family. Type I subfamily. Heterohexadecamer of 8 large chains and 8 small chains. The cofactor is Mg(2+).

It localises to the plastid. The protein resides in the chloroplast. The catalysed reaction is 2 (2R)-3-phosphoglycerate + 2 H(+) = D-ribulose 1,5-bisphosphate + CO2 + H2O. It catalyses the reaction D-ribulose 1,5-bisphosphate + O2 = 2-phosphoglycolate + (2R)-3-phosphoglycerate + 2 H(+). In terms of biological role, ruBisCO catalyzes two reactions: the carboxylation of D-ribulose 1,5-bisphosphate, the primary event in carbon dioxide fixation, as well as the oxidative fragmentation of the pentose substrate in the photorespiration process. Both reactions occur simultaneously and in competition at the same active site. The polypeptide is Ribulose bisphosphate carboxylase large chain (Cyanidium caldarium (Red alga)).